The following is a 220-amino-acid chain: Uracil-DNA glycosylase (220 aa).

Residue D60 is the Proton acceptor of the active site.

The protein belongs to the uracil-DNA glycosylase (UDG) superfamily. UNG family.

It localises to the cytoplasm. It carries out the reaction Hydrolyzes single-stranded DNA or mismatched double-stranded DNA and polynucleotides, releasing free uracil.. In terms of biological role, excises uracil residues from the DNA which can arise as a result of misincorporation of dUMP residues by DNA polymerase or due to deamination of cytosine. The sequence is that of Uracil-DNA glycosylase from Francisella tularensis subsp. holarctica (strain FTNF002-00 / FTA).